The following is a 156-amino-acid chain: uncharacterized protein (156 aa).

2 disordered regions span residues 22-64 (KERV…VLKK) and 81-156 (AARA…DENE). The segment covering 43-56 (PEEDGDHSDKEDEQ) has biased composition (acidic residues). S50 is subject to Phosphoserine. K108 is modified (N6-acetyllysine). Positions 121-134 (TKEEDEINKQDSVK) are enriched in basic and acidic residues. Phosphoserine is present on S148.

This is an uncharacterized protein from Bos taurus (Bovine).